A 327-amino-acid chain; its full sequence is L-lactate dehydrogenase (327 aa).

NAD(+)-binding positions include V18, D39, K44, Y69, and 83 to 84 (GA). Substrate contacts are provided by residues Q86, R92, and 124-127 (NPVD). NAD(+) is bound by residues 122–124 (AAN) and S147. Residue 152–155 (DSAR) participates in substrate binding. Residues R157 and H172 each coordinate beta-D-fructose 1,6-bisphosphate. The Proton acceptor role is filled by H179. At Y224 the chain carries Phosphotyrosine. Position 233 (T233) interacts with substrate.

Belongs to the LDH/MDH superfamily. LDH family. In terms of assembly, homotetramer.

The protein resides in the cytoplasm. The catalysed reaction is (S)-lactate + NAD(+) = pyruvate + NADH + H(+). Its pathway is fermentation; pyruvate fermentation to lactate; (S)-lactate from pyruvate: step 1/1. Allosterically activated by fructose 1,6-bisphosphate (FBP). In terms of biological role, catalyzes the conversion of lactate to pyruvate. This is L-lactate dehydrogenase from Streptococcus pyogenes serotype M3 (strain SSI-1).